The sequence spans 127 residues: Small ribosomal subunit protein uS12 (127 aa).

Asp89 bears the 3-methylthioaspartic acid mark.

This sequence belongs to the universal ribosomal protein uS12 family. In terms of assembly, part of the 30S ribosomal subunit. Contacts proteins S8 and S17. May interact with IF1 in the 30S initiation complex.

In terms of biological role, with S4 and S5 plays an important role in translational accuracy. Its function is as follows. Interacts with and stabilizes bases of the 16S rRNA that are involved in tRNA selection in the A site and with the mRNA backbone. Located at the interface of the 30S and 50S subunits, it traverses the body of the 30S subunit contacting proteins on the other side and probably holding the rRNA structure together. The combined cluster of proteins S8, S12 and S17 appears to hold together the shoulder and platform of the 30S subunit. This chain is Small ribosomal subunit protein uS12, found in Nautilia profundicola (strain ATCC BAA-1463 / DSM 18972 / AmH).